A 142-amino-acid polypeptide reads, in one-letter code: Large ribosomal subunit protein uL13c (142 aa).

This sequence belongs to the universal ribosomal protein uL13 family. In terms of assembly, part of the 50S ribosomal subunit.

It localises to the plastid. Its subcellular location is the chloroplast. In Pyropia yezoensis (Susabi-nori), this protein is Large ribosomal subunit protein uL13c.